Reading from the N-terminus, the 326-residue chain is N-acetyl-gamma-glutamyl-phosphate reductase (326 aa).

Residue Cys155 is part of the active site.

Belongs to the NAGSA dehydrogenase family. Type 1 subfamily.

The protein localises to the cytoplasm. It carries out the reaction N-acetyl-L-glutamate 5-semialdehyde + phosphate + NADP(+) = N-acetyl-L-glutamyl 5-phosphate + NADPH + H(+). The protein operates within amino-acid biosynthesis; L-arginine biosynthesis; N(2)-acetyl-L-ornithine from L-glutamate: step 3/4. Functionally, catalyzes the NADPH-dependent reduction of N-acetyl-5-glutamyl phosphate to yield N-acetyl-L-glutamate 5-semialdehyde. The polypeptide is N-acetyl-gamma-glutamyl-phosphate reductase (Shewanella oneidensis (strain ATCC 700550 / JCM 31522 / CIP 106686 / LMG 19005 / NCIMB 14063 / MR-1)).